A 440-amino-acid polypeptide reads, in one-letter code: Thymidine phosphorylase (440 aa).

This sequence belongs to the thymidine/pyrimidine-nucleoside phosphorylase family. Homodimer.

It carries out the reaction thymidine + phosphate = 2-deoxy-alpha-D-ribose 1-phosphate + thymine. Its pathway is pyrimidine metabolism; dTMP biosynthesis via salvage pathway; dTMP from thymine: step 1/2. The enzymes which catalyze the reversible phosphorolysis of pyrimidine nucleosides are involved in the degradation of these compounds and in their utilization as carbon and energy sources, or in the rescue of pyrimidine bases for nucleotide synthesis. The chain is Thymidine phosphorylase from Proteus mirabilis (strain HI4320).